The primary structure comprises 93 residues: Large ribosomal subunit protein uL23cz/uL23cy (93 aa).

Belongs to the universal ribosomal protein uL23 family. As to quaternary structure, part of the 50S ribosomal subunit.

Its subcellular location is the plastid. The protein resides in the chloroplast. Binds to 23S rRNA. This is Large ribosomal subunit protein uL23cz/uL23cy (rpl23-A) from Helianthus annuus (Common sunflower).